Here is a 436-residue protein sequence, read N- to C-terminus: Serine/threonine-protein kinase STK11 (436 aa).

S31 carries the phosphoserine modification. 2 positions are modified to N6-acetyllysine: K44 and K48. A sufficient for interaction with SIRT1 region spans residues 45-90 (LIGKYLMGDLLGEGSYGKVKEVLDSETLCRRAVKILKKKKLRRIPN). The Protein kinase domain maps to 49 to 309 (YLMGDLLGEG…IRQIRQHSWF (261 aa)). ATP-binding positions include 55–63 (LGEGSYGKV) and K78. An N6-acetyllysine mark is found at K96 and K97. D176 serves as the catalytic Proton acceptor. T189 is subject to Phosphothreonine; by autocatalysis. K296 and K311 each carry N6-acetyllysine. A Phosphoserine modification is found at S325. The residue at position 336 (T336) is a Phosphothreonine; by autocatalysis. Phosphothreonine; by ATM and autocatalysis is present on T366. Residues 397-421 (GTEPQLSSKVKPEGRPGAANPARKV) form a disordered region. S403 is subject to Phosphoserine. K420 is subject to N6-acetyllysine. Residue C422 is the site of S-palmitoyl cysteine attachment. N6-acetyllysine is present on K426. Residue S431 is modified to Phosphoserine; by autocatalysis, PKA, PKC/PRKCZ and RPS6KA1. Cysteine methyl ester is present on C433. The S-farnesyl cysteine moiety is linked to residue C433. At K434 the chain carries N6-acetyllysine. The propeptide at 434 to 436 (KQQ) is removed in mature form.

This sequence belongs to the protein kinase superfamily. CAMK Ser/Thr protein kinase family. LKB1 subfamily. In terms of assembly, catalytic component of a trimeric complex composed of STK11/LKB1, STRAD (STRADA or STRADB) and CAB39/MO25 (CAB39/MO25alpha or CAB39L/MO25beta): the complex tethers STK11/LKB1 in the cytoplasm and stimulates its catalytic activity. Found in a ternary complex composed of SMAD4, STK11/LKB1 and STK11IP. Interacts with NR4A1, p53/TP53, SMAD4, STK11IP and WDR6. Interacts with NISCH; this interaction may increase STK11 activity. Interacts with SIRT1; the interaction deacetylates STK11. Interacts with CDKN1A. Mg(2+) is required as a cofactor. It depends on Mn(2+) as a cofactor. In terms of processing, phosphorylated by ATM at Thr-366 following ionizing radiation (IR). Phosphorylation at Ser-431 by RPS6KA1 and/or some PKA is required to inhibit cell growth. Phosphorylation at Ser-431 is also required during neuronal polarization to mediate phosphorylation of BRSK1 and BRSK2. Phosphorylation by PKC/PRKCZ at Ser-397 in isoform 2 promotes metformin (or peroxynitrite)-induced nuclear export of STK11 and activation of AMPK. UV radiation -induced phosphorylation at Thr-366 mediates CDKN1A degradation. Post-translationally, acetylated. Deacetylation at Lys-48 enhances cytoplasmic localization and kinase activity in vitro. As to expression, expressed in brain, heart, testis, skeletal muscle and spleen, and weakly in liver and kidney. Isoform 1 is expressed at highest levels in the brain. Isoform 2 is expressed at highest levels in the testis, primarily in postmitotic developing germ cells (at protein level).

It localises to the nucleus. The protein resides in the cytoplasm. The protein localises to the membrane. It is found in the mitochondrion. The catalysed reaction is L-seryl-[protein] + ATP = O-phospho-L-seryl-[protein] + ADP + H(+). The enzyme catalyses L-threonyl-[protein] + ATP = O-phospho-L-threonyl-[protein] + ADP + H(+). Activated by forming a complex with STRAD (STRADA or STRADB) and CAB39/MO25 (CAB39/MO25alpha or CAB39L/MO25beta): STRADA (or STRADB)-binding promotes a conformational change of STK11/LKB1 in an active conformation, which is stabilized by CAB39/MO25alpha (or CAB39L/MO25beta) interacting with the STK11/LKB1 activation loop. Sequestration in the nucleus by NR4A1 prevents it from phosphorylating and activating cytoplasmic AMPK. In terms of biological role, tumor suppressor serine/threonine-protein kinase that controls the activity of AMP-activated protein kinase (AMPK) family members, thereby playing a role in various processes such as cell metabolism, cell polarity, apoptosis and DNA damage response. Acts by phosphorylating the T-loop of AMPK family proteins, thus promoting their activity: phosphorylates PRKAA1, PRKAA2, BRSK1, BRSK2, MARK1, MARK2, MARK3, MARK4, NUAK1, NUAK2, SIK1, SIK2, SIK3 and SNRK but not MELK. Also phosphorylates non-AMPK family proteins such as STRADA, PTEN and possibly p53/TP53. Acts as a key upstream regulator of AMPK by mediating phosphorylation and activation of AMPK catalytic subunits PRKAA1 and PRKAA2 and thereby regulates processes including: inhibition of signaling pathways that promote cell growth and proliferation when energy levels are low, glucose homeostasis in liver, activation of autophagy when cells undergo nutrient deprivation, and B-cell differentiation in the germinal center in response to DNA damage. Also acts as a regulator of cellular polarity by remodeling the actin cytoskeleton. Required for cortical neuron polarization by mediating phosphorylation and activation of BRSK1 and BRSK2, leading to axon initiation and specification. Involved in DNA damage response: interacts with p53/TP53 and recruited to the CDKN1A/WAF1 promoter to participate in transcription activation. Able to phosphorylate p53/TP53; the relevance of such result in vivo is however unclear and phosphorylation may be indirect and mediated by downstream STK11/LKB1 kinase NUAK1. Also acts as a mediator of p53/TP53-dependent apoptosis via interaction with p53/TP53: translocates to the mitochondrion during apoptosis and regulates p53/TP53-dependent apoptosis pathways. Regulates UV radiation-induced DNA damage response mediated by CDKN1A. In association with NUAK1, phosphorylates CDKN1A in response to UV radiation and contributes to its degradation which is necessary for optimal DNA repair. Has a role in spermiogenesis. This chain is Serine/threonine-protein kinase STK11, found in Rattus norvegicus (Rat).